A 380-amino-acid chain; its full sequence is Probable transposase for insertion sequence element IS701 (380 aa).

In terms of biological role, involved in the transposition of the insertion sequence. The polypeptide is Probable transposase for insertion sequence element IS701 (Microchaete diplosiphon (Fremyella diplosiphon)).